A 743-amino-acid polypeptide reads, in one-letter code: GTPase-activating protein gyp7 (743 aa).

In terms of domain architecture, Rab-GAP TBC spans 411 to 633 (GIQPSLRKEV…KLWDVLFTNY (223 aa)).

The protein resides in the cytoplasm. It is found in the nucleus. In terms of biological role, most effectively accelerates the intrinsic GTPase activity of ypt7. In Schizosaccharomyces pombe (strain 972 / ATCC 24843) (Fission yeast), this protein is GTPase-activating protein gyp7.